Reading from the N-terminus, the 504-residue chain is UDP-N-acetylglucosamine--peptide N-acetylglucosaminyltransferase GtfA subunit (504 aa).

Position 16–19 (16–19) interacts with UDP; that stretch reads GVEY. Residue histidine 243 participates in N-acetyl-D-glucosamine binding. 385–386 serves as a coordination point for UDP; that stretch reads HK. Residue 405 to 408 coordinates N-acetyl-D-glucosamine; the sequence is EGFG.

The protein belongs to the glycosyltransferase group 1 family. Glycosyltransferase 4 subfamily. As to quaternary structure, interacts with stabilizing protein GtfB (Gtf1), probably via the N-terminus of this protein; probably forms a heterotetramer with 2 subunits each of GtfA and GtfB. Part of the accessory SecA2/SecY2 protein translocation apparatus.

It localises to the cytoplasm. It is found in the cell membrane. The enzyme catalyses L-seryl-[protein] + UDP-N-acetyl-alpha-D-glucosamine = 3-O-[N-acetyl-alpha-D-glucosaminyl]-L-seryl-[protein] + UDP + H(+). Its pathway is protein modification; protein glycosylation. Required for polymorphic O-glycosylation of serine-rich repeat protein Fap1. Catalyzes the first step in glycosylation by transferring N-acetylglucosamine from UDP-GlcNAc to serine residues in Fap1. Part of the accessory SecA2/SecY2 system specifically required to export Fap1, a serine-rich fimbrial adhesin encoded upstream in the same operon. The GtfA-GtfB (Gtf1-Gtf2 in this bacteria) complex adds GlcNAc from UDP-GlcNAc to Fap1, attaching the first sugar residue. Cannot use not UDP-Glc as substrate. This subunit has very low glycosyltransferase activity; the GtfB stabilizing protein enhances membrane association, protease resistance and glycosyltransferase activity. This is UDP-N-acetylglucosamine--peptide N-acetylglucosaminyltransferase GtfA subunit from Streptococcus parasanguinis.